The sequence spans 90 residues: RNA-binding protein Hfq (90 aa).

The Sm domain maps to 9–68; that stretch reads EPFLNTLRKEKVPVSIYLVNGIKLQGQIESFDQFVVLLRNNVNQMVYKHAISTIVPARRV.

It belongs to the Hfq family. As to quaternary structure, homohexamer.

In terms of biological role, RNA chaperone that binds small regulatory RNA (sRNAs) and mRNAs to facilitate mRNA translational regulation in response to envelope stress, environmental stress and changes in metabolite concentrations. Also binds with high specificity to tRNAs. This is RNA-binding protein Hfq from Halorhodospira halophila (strain DSM 244 / SL1) (Ectothiorhodospira halophila (strain DSM 244 / SL1)).